The primary structure comprises 118 residues: Beta-elicitin cryptogein (118 aa).

Positions 1-20 (MNFTALLAAVAAALVGSANA) are cleaved as a signal peptide. 3 disulfide bridges follow: Cys-23–Cys-91, Cys-47–Cys-76, and Cys-71–Cys-115.

Belongs to the elicitin family.

It localises to the secreted. Induces local and distal defense responses (incompatible hypersensitive reaction) in plants from the solanaceae and cruciferae families. Elicits leaf necrosis and causes the accumulation of pathogenesis-related proteins. Might interact with the lipidic molecules of the plasma membrane. This Phytophthora cryptogea protein is Beta-elicitin cryptogein.